The chain runs to 76 residues: DNA-directed RNA polymerase subunit epsilon (76 aa).

The protein belongs to the RNA polymerase subunit epsilon family. RNAP is composed of a core of 2 alpha, a beta and a beta' subunit. The core is associated with a delta subunit, and at least one of epsilon or omega. When a sigma factor is associated with the core the holoenzyme is formed, which can initiate transcription.

The enzyme catalyses RNA(n) + a ribonucleoside 5'-triphosphate = RNA(n+1) + diphosphate. Its function is as follows. A non-essential component of RNA polymerase (RNAP). This Streptococcus sanguinis (strain SK36) protein is DNA-directed RNA polymerase subunit epsilon.